The sequence spans 475 residues: Methyltransferase-like protein 25B (475 aa).

Positions 186–210 form a coiled coil; sequence QRLVERAQRLDQELLQTLEKEEKRN. The chain crosses the membrane as a helical span at residues 406–426; sequence VVAFFSLALLLAPLVETLILL.

Belongs to the METTL25 family.

Its subcellular location is the membrane. This Bos taurus (Bovine) protein is Methyltransferase-like protein 25B.